The chain runs to 255 residues: Cathepsin G (255 aa).

Positions 1 to 18 are cleaved as a signal peptide; the sequence is MQPLLLLLAFLLPTGAEA. A propeptide spans 19 to 20 (activation peptide); sequence GE. Residues 21 to 25 form an important for antimicrobial activity region; sequence IIGGR. One can recognise a Peptidase S1 domain in the interval 21 to 243; it reads IIGGRESRPH…FLPWIRTTMR (223 aa). A disulfide bond links cysteine 49 and cysteine 65. Catalysis depends on histidine 64, which acts as the Charge relay system. Asparagine 71 carries an N-linked (GlcNAc...) (complex) asparagine; alternate glycan. N-linked (GlcNAc...) (paucimannose) asparagine; alternate glycosylation is present at asparagine 71. The interval 97–111 is important for antimicrobial activity; the sequence is HPQYNQRTIQNDIML. Residue aspartate 108 is the Charge relay system of the active site. 2 cysteine pairs are disulfide-bonded: cysteine 142–cysteine 207 and cysteine 172–cysteine 186. The active-site Charge relay system is serine 201. A propeptide spanning residues 245-255 is cleaved from the precursor; it reads FKLLDQMETPL.

Belongs to the peptidase S1 family. As to quaternary structure, (Microbial infection) Interacts with CASP4; the interaction is promoted by the Td92 surface protein of the periodontal pathogen T.denticola and leads to CASP4 activation. (Microbial infection) Interacts with M.tuberculosis protein Rv3364c. In terms of assembly, (Microbial infection) Interacts with S.aureus EapH1; EapH1 acts as a reversible inhibitor of CATG activity. In terms of processing, two C-terminal truncation variants have been identified, one which ends at Arg-243 and one which ends at Ser-244. Expressed in neutrophils (at protein level). Expressed in B cells.

The protein localises to the cell membrane. It localises to the cytoplasmic granule. Its subcellular location is the secreted. The protein resides in the cytoplasm. It is found in the cytosol. The protein localises to the lysosome. It localises to the nucleus. It carries out the reaction Specificity similar to chymotrypsin C.. With respect to regulation, inhibited by soybean trypsin inhibitor, benzamidine, the synthetic peptide R13K, Z-Gly-Leu-Phe-CH2Cl, phenylmethylsulfonyl fluoride, 3,4-dichloroisocoumarin, DFP, SBTI and alpha-1-antitrypsin. Inhibited by LPS from P.aeruginosa but not by LPS from S.minnesota. Not inhibited by elastinal, CMK, TLCK, ETDA or leupeptin. Its activity is regulated as follows. (Microbial infection) Inhibited reversibly by S.aureus EapH1. (Microbial infection) Activity is induced by the Td92 surface protein of the periodontal pathogen T.denticola. In terms of biological role, serine protease with trypsin- and chymotrypsin-like specificity. Also displays antibacterial activity against Gram-negative and Gram-positive bacteria independent of its protease activity. Prefers Phe and Tyr residues in the P1 position of substrates but also cleaves efficiently after Trp and Leu. Shows a preference for negatively charged amino acids in the P2' position and for aliphatic amino acids both upstream and downstream of the cleavage site. Required for recruitment and activation of platelets which is mediated by the F2RL3/PAR4 platelet receptor. Binds reversibly to and stimulates B cells and CD4(+) and CD8(+) T cells. Also binds reversibly to natural killer (NK) cells and enhances NK cell cytotoxicity through its protease activity. Cleaves complement C3. Cleaves vimentin. Cleaves thrombin receptor F2R/PAR1 and acts as either an agonist or an inhibitor, depending on the F2R cleavage site. Cleavage of F2R at '41-Arg-|-Ser-42' results in receptor activation while cleavage at '55-Phe-|-Trp-56' results in inhibition of receptor activation. Cleaves the synovial mucin-type protein PRG4/lubricin. Cleaves and activates IL36G which promotes expression of chemokines CXCL1 and CXLC8 in keratinocytes. Cleaves IL33 into mature forms which have greater activity than the unprocessed form. Cleaves coagulation factor F8 to produce a partially activated form. Also cleaves and activates coagulation factor F10. Cleaves leukocyte cell surface protein SPN/CD43 to release its extracellular domain and trigger its intramembrane proteolysis by gamma-secretase, releasing the CD43 cytoplasmic tail chain (CD43-ct) which translocates to the nucleus. Cleaves CCL5/RANTES to produce RANTES(4-68) lacking the N-terminal three amino acids which exhibits reduced chemotactic and antiviral activities. During apoptosis, cleaves SMARCA2/BRM to produce a 160 kDa cleavage product which localizes to the cytosol. Cleaves myelin basic protein MBP in B cell lysosomes at '224-Phe-|-Lys-225' and '248-Phe-|-Ser-249', degrading the major immunogenic MBP epitope and preventing the activation of MBP-specific autoreactive T cells. Cleaves annexin ANXA1 and antimicrobial peptide CAMP to produce peptides which act on neutrophil N-formyl peptide receptors to enhance the release of CXCL2. Acts as a ligand for the N-formyl peptide receptor FPR1, enhancing phagocyte chemotaxis. Has antibacterial activity against the Gram-negative bacteria N.gonorrhoeae and P.aeruginosa. Likely to act against N.gonorrhoeae by interacting with N.gonorrhoeae penA/PBP2. Exhibits potent antimicrobial activity against the Gram-positive bacterium L.monocytogenes. Has antibacterial activity against the Gram-positive bacterium S.aureus and degrades S.aureus biofilms, allowing polymorphonuclear leukocytes to penetrate the biofilm and phagocytose bacteria. Has antibacterial activity against M.tuberculosis. Mediates CASP4 activation induced by the Td92 surface protein of the periodontal pathogen T.denticola, causing production and secretion of IL1A and leading to pyroptosis of gingival fibroblasts. Induces platelet aggregation which is strongly potentiated in the presence of ELANE. The sequence is that of Cathepsin G (CTSG) from Homo sapiens (Human).